We begin with the raw amino-acid sequence, 87 residues long: U14-lycotoxin-Ls1a (87 aa).

A signal peptide spans 1–20; sequence MNSKVFAVLLLLALSTCVLS. A WAP domain is found at 21–66; it reads EKYCPTPRNTSCKKMNIRNNCCRDSDCTSNAFCCAEPCGNFCHKAS. Disulfide bonds link Cys24–Cys54, Cys32–Cys58, Cys41–Cys53, Cys42–Cys80, and Cys47–Cys62.

This sequence belongs to the venom protein 11 family. 01 (wap-1) subfamily. Post-translationally, contains 5 disulfide bonds. As to expression, expressed by the venom gland.

The protein resides in the secreted. Functionally, has antibacterial activity. The sequence is that of U14-lycotoxin-Ls1a from Lycosa singoriensis (Wolf spider).